Consider the following 253-residue polypeptide: Phosphate import ATP-binding protein PstB (253 aa).

Residues 7-249 form the ABC transporter domain; the sequence is ASAKNLNLWY…PQSSKTKRYI (243 aa). ATP is bound at residue 39–46; it reads GPSGCGKS.

This sequence belongs to the ABC transporter superfamily. Phosphate importer (TC 3.A.1.7) family. In terms of assembly, the complex is composed of two ATP-binding proteins (PstB), two transmembrane proteins (PstC and PstA) and a solute-binding protein (PstS).

The protein localises to the cell inner membrane. The catalysed reaction is phosphate(out) + ATP + H2O = ADP + 2 phosphate(in) + H(+). Functionally, part of the ABC transporter complex PstSACB involved in phosphate import. Responsible for energy coupling to the transport system. The chain is Phosphate import ATP-binding protein PstB from Ehrlichia ruminantium (strain Gardel).